The chain runs to 214 residues: Outer-membrane lipoprotein LolB (214 aa).

The signal sequence occupies residues 1-25; sequence MNNLKRFTESIFSCIALSTLLFLGG. A lipid anchor (N-palmitoyl cysteine) is attached at Cys-26. Cys-26 carries S-diacylglycerol cysteine lipidation.

Belongs to the LolB family. In terms of assembly, monomer.

Its subcellular location is the cell outer membrane. Its function is as follows. Plays a critical role in the incorporation of lipoproteins in the outer membrane after they are released by the LolA protein. The chain is Outer-membrane lipoprotein LolB from Shewanella putrefaciens (strain CN-32 / ATCC BAA-453).